The primary structure comprises 479 residues: Cardiolipin synthase A (479 aa).

A run of 2 helical transmembrane segments spans residues 8–28 and 38–58; these read FFGY…LHAV and IAWA…YLIF. PLD phosphodiesterase domains follow at residues 218-245 and 392-419; these read VNFR…GDEY and QPGF…DNRS. Active-site residues include His223, Lys225, Asp230, His397, Lys399, and Asp404.

Belongs to the phospholipase D family. Cardiolipin synthase subfamily. ClsA sub-subfamily.

The protein localises to the cell inner membrane. It catalyses the reaction 2 a 1,2-diacyl-sn-glycero-3-phospho-(1'-sn-glycerol) = a cardiolipin + glycerol. Functionally, catalyzes the reversible phosphatidyl group transfer from one phosphatidylglycerol molecule to another to form cardiolipin (CL) (diphosphatidylglycerol) and glycerol. The sequence is that of Cardiolipin synthase A from Pseudomonas entomophila (strain L48).